The primary structure comprises 879 residues: Alanine--tRNA ligase 1 (879 aa).

His566, His570, Cys668, and His672 together coordinate Zn(2+).

Belongs to the class-II aminoacyl-tRNA synthetase family. Requires Zn(2+) as cofactor.

It is found in the cytoplasm. It catalyses the reaction tRNA(Ala) + L-alanine + ATP = L-alanyl-tRNA(Ala) + AMP + diphosphate. Functionally, catalyzes the attachment of alanine to tRNA(Ala) in a two-step reaction: alanine is first activated by ATP to form Ala-AMP and then transferred to the acceptor end of tRNA(Ala). Also edits incorrectly charged Ser-tRNA(Ala) and Gly-tRNA(Ala) via its editing domain. This is Alanine--tRNA ligase 1 from Lachnoclostridium phytofermentans (strain ATCC 700394 / DSM 18823 / ISDg) (Clostridium phytofermentans).